Consider the following 318-residue polypeptide: EFTTLFLLFSVLLLSASAEQCGSQAGGALCASGLCCSKFGWCGDTNDYCGPGNCQSQCPGGPGPSGDLGGVISNSMFDQMLNHRNDNACQGKGNFYSYNAFISAAGSFPGFGTTGDITARKREIAAFFAQTSHETTGGWPTAPDGPYAWGYCFLREQGSPGDYCTPSSQWPCAPGRKYFGRGPIQISHNYNYGPCGRAIGVDLLNNPDLVATDSVISFKSAIWFWMTPQSPKPSCHDVITGRWQPSGVDQAANRVPGFGVITNIINGGLECGHGSDSRVQDRIGFYRRYCGILGVSPGDNLDCGNQRSFGNGLLVDTM.

An N-terminal signal peptide occupies residues 1–18 (EFTTLFLLFSVLLLSASA). The Chitin-binding type-1 domain occupies 19–60 (EQCGSQAGGALCASGLCCSKFGWCGDTNDYCGPGNCQSQCPG). Intrachain disulfides connect Cys21/Cys36, Cys30/Cys42, Cys35/Cys49, Cys54/Cys58, Cys89/Cys152, Cys164/Cys172, and Cys271/Cys303. Glu134 serves as the catalytic Proton donor. The propeptide at 312–318 (GLLVDTM) is removed in mature form, vacuolar targeting.

This sequence belongs to the glycosyl hydrolase 19 family. Chitinase class I subfamily.

Its subcellular location is the vacuole. The catalysed reaction is Random endo-hydrolysis of N-acetyl-beta-D-glucosaminide (1-&gt;4)-beta-linkages in chitin and chitodextrins.. Functionally, defense against chitin-containing fungal pathogens. This chain is Endochitinase 1 (CHTB1), found in Solanum tuberosum (Potato).